A 395-amino-acid polypeptide reads, in one-letter code: Cuticlin-5 (395 aa).

Residues 1–18 (MNFILAVFAIILLQAVRG) form the signal peptide. Residues 19–358 (EIDNAIVGDP…ELCMTAIGTT (340 aa)) lie on the Extracellular side of the membrane. The region spanning 46-291 (SCVGNFIIKV…DYCDVPSCPD (246 aa)) is the ZP domain. N-linked (GlcNAc...) asparagine glycans are attached at residues Asn90 and Asn307. The helical transmembrane segment at 359 to 379 (LLVFLNAFLFIISLVSIVHVC) threads the bilayer. Residues 380 to 395 (CFRTSPKLEKTKSTML) lie on the Cytoplasmic side of the membrane.

It localises to the cell membrane. Functionally, plays a role in alae formation in L1 and dauer stage larvae. The chain is Cuticlin-5 from Caenorhabditis elegans.